The primary structure comprises 474 residues: Sestrin homolog (474 aa).

It belongs to the sestrin family.

It localises to the nucleus. The protein localises to the cytoplasm. May function as a negative feedback regulator of TOR function. The chain is Sestrin homolog from Caenorhabditis elegans.